Here is a 464-residue protein sequence, read N- to C-terminus: DNA primase DnaG (464 aa).

The 75-residue stretch at 200-274 (DSIIVVEGRA…DVDYVARAPE (75 aa)) folds into the Toprim domain. Mg(2+) contacts are provided by E206, D248, and D250. Basic and acidic residues predominate over residues 322–332 (NGREEKVREVK). Positions 322-359 (NGREEKVREVKPPAPAPAPAPAPKPIEKPEPKEREEKI) are disordered. Pro residues predominate over residues 333-345 (PPAPAPAPAPAPK). Over residues 346 to 359 (PIEKPEPKEREEKI) the composition is skewed to basic and acidic residues.

The protein belongs to the archaeal DnaG primase family. Forms a ternary complex with MCM helicase and DNA. Component of the archaeal exosome complex. Requires Mg(2+) as cofactor.

It carries out the reaction ssDNA + n NTP = ssDNA/pppN(pN)n-1 hybrid + (n-1) diphosphate.. In terms of biological role, RNA polymerase that catalyzes the synthesis of short RNA molecules used as primers for DNA polymerase during DNA replication. Also part of the exosome, which is a complex involved in RNA degradation. Acts as a poly(A)-binding protein that enhances the interaction between heteromeric, adenine-rich transcripts and the exosome. The chain is DNA primase DnaG from Thermococcus onnurineus (strain NA1).